The primary structure comprises 496 residues: ADP-dependent glucokinase (496 aa).

An N-terminal signal peptide occupies residues 1 to 22 (MALWRGSACAGFLALAVGCVFL). The ADPK domain occupies 52–496 (SPESRLAAAW…GLFYSEARPD (445 aa)). Mg(2+) is bound by residues Glu-297, Glu-328, and Asp-481. Asp-481 serves as the catalytic Proton acceptor.

It belongs to the ADP-dependent glucokinase family. In terms of assembly, monomer. The cofactor is Mg(2+).

Its subcellular location is the secreted. It catalyses the reaction D-glucose + ADP = D-glucose 6-phosphate + AMP + H(+). Its pathway is carbohydrate degradation; glycolysis. In terms of biological role, catalyzes the phosphorylation of D-glucose to D-glucose 6-phosphate using ADP as the phosphate donor. GDP and CDP can replace ADP, but with reduced efficiency. This is ADP-dependent glucokinase (Adpgk) from Mus musculus (Mouse).